The primary structure comprises 465 residues: Ribulose bisphosphate carboxylase large chain (465 aa).

Lysine 4 bears the N6,N6,N6-trimethyllysine mark. 2 residues coordinate substrate: asparagine 113 and threonine 163. The Proton acceptor role is filled by lysine 165. Lysine 167 provides a ligand contact to substrate. Residues lysine 191, aspartate 193, and glutamate 194 each coordinate Mg(2+). Position 191 is an N6-carboxylysine (lysine 191). Histidine 284 acts as the Proton acceptor in catalysis. Positions 285, 317, and 369 each coordinate substrate.

Belongs to the RuBisCO large chain family. Type I subfamily. In terms of assembly, heterohexadecamer of 8 large chains and 8 small chains; disulfide-linked. The disulfide link is formed within the large subunit homodimers. It depends on Mg(2+) as a cofactor. Post-translationally, the disulfide bond which can form in the large chain dimeric partners within the hexadecamer appears to be associated with oxidative stress and protein turnover.

The protein resides in the plastid. It is found in the chloroplast. It carries out the reaction 2 (2R)-3-phosphoglycerate + 2 H(+) = D-ribulose 1,5-bisphosphate + CO2 + H2O. The catalysed reaction is D-ribulose 1,5-bisphosphate + O2 = 2-phosphoglycolate + (2R)-3-phosphoglycerate + 2 H(+). In terms of biological role, ruBisCO catalyzes two reactions: the carboxylation of D-ribulose 1,5-bisphosphate, the primary event in carbon dioxide fixation, as well as the oxidative fragmentation of the pentose substrate in the photorespiration process. Both reactions occur simultaneously and in competition at the same active site. The sequence is that of Ribulose bisphosphate carboxylase large chain from Casuarina equisetifolia (Beach she-oak).